The following is a 117-amino-acid chain: Immunoglobulin lambda variable 1-51 (117 aa).

Positions 1-19 are cleaved as a signal peptide; the sequence is MTCSPLLLTLLIHCTGSWA. Position 20 is a pyrrolidone carboxylic acid (Gln-20). A framework-1 region spans residues 20 to 44; it reads QSVLTQPPSVSAAPGQKVTISCSGS. The Ig-like domain occupies 20–117; the sequence is QSVLTQPPSV…CGTWDSSLSA (98 aa). A disulfide bridge connects residues Cys-41 and Cys-108. Residues 45–52 are complementarity-determining-1; that stretch reads SSNIGNNY. The interval 53-69 is framework-2; that stretch reads VSWYQQLPGTAPKLLIY. Positions 70–72 are complementarity-determining-2; sequence DNN. A framework-3 region spans residues 73 to 108; it reads KRPSGIPDRFSGSKSGTSATLGITGLQTGDEADYYC. Residues 109-117 form a complementarity-determining-3 region; the sequence is GTWDSSLSA.

Immunoglobulins are composed of two identical heavy chains and two identical light chains; disulfide-linked.

It is found in the secreted. The protein localises to the cell membrane. Functionally, v region of the variable domain of immunoglobulin light chains that participates in the antigen recognition. Immunoglobulins, also known as antibodies, are membrane-bound or secreted glycoproteins produced by B lymphocytes. In the recognition phase of humoral immunity, the membrane-bound immunoglobulins serve as receptors which, upon binding of a specific antigen, trigger the clonal expansion and differentiation of B lymphocytes into immunoglobulins-secreting plasma cells. Secreted immunoglobulins mediate the effector phase of humoral immunity, which results in the elimination of bound antigens. The antigen binding site is formed by the variable domain of one heavy chain, together with that of its associated light chain. Thus, each immunoglobulin has two antigen binding sites with remarkable affinity for a particular antigen. The variable domains are assembled by a process called V-(D)-J rearrangement and can then be subjected to somatic hypermutations which, after exposure to antigen and selection, allow affinity maturation for a particular antigen. The protein is Immunoglobulin lambda variable 1-51 of Homo sapiens (Human).